The primary structure comprises 215 residues: MGKIYDWFEERLEIQAIADDIISKYVPPHVNIFYCLGGITLTCFLIQVATGFAMTFYYRPTVAEAFASVQYIMTDVNFGWLIRSVHRWSASMMVLMMILHVFRVYLTGGFKKPRELTWVTGVILAVLTVSFGVTGYSLPWDQIGYWAVKIVTGVPDAIPIIGAPIVELLRGSVSVGQTTLTRFYSLHTFVLPLLTAVFMLMHFLMIRKQGISGPL.

A helical transmembrane segment spans residues 32–52; that stretch reads IFYCLGGITLTCFLIQVATGF. Position 35 (cysteine 35) interacts with heme c. 2 residues coordinate heme b: histidine 86 and histidine 100. Helical transmembrane passes span 90–110, 116–136, and 186–206; these read ASMM…TGGF, LTWV…VTGY, and LHTF…FLMI. Residues histidine 187 and histidine 202 each contribute to the heme b site.

Belongs to the cytochrome b family. PetB subfamily. The 4 large subunits of the cytochrome b6-f complex are cytochrome b6, subunit IV (17 kDa polypeptide, PetD), cytochrome f and the Rieske protein, while the 4 small subunits are PetG, PetL, PetM and PetN. The complex functions as a dimer. Heme b is required as a cofactor. Requires heme c as cofactor.

The protein localises to the plastid. The protein resides in the chloroplast thylakoid membrane. Component of the cytochrome b6-f complex, which mediates electron transfer between photosystem II (PSII) and photosystem I (PSI), cyclic electron flow around PSI, and state transitions. This chain is Cytochrome b6, found in Spirogyra maxima (Green alga).